Here is a 68-residue protein sequence, read N- to C-terminus: MDPETCPCPTGGSCTCSDPCKCEGCTCASSKKSCCSCCPAECEKCAKDCVCKGGEGAEAEEKKCSCCQ.

M1 carries the post-translational modification N-acetylmethionine. Positions M1–S30 are beta. C6, C8, C14, C16, C20, C22, C25, and C27 together coordinate a divalent metal cation. Residues K31 to Q68 are alpha. At S33 the chain carries Phosphoserine. A divalent metal cation contacts are provided by C34, C35, C37, C38, C42, C45, C49, C51, C64, C66, and C67.

The protein belongs to the metallothionein superfamily. Type 1 family.

In terms of biological role, binds heavy metals. Contains five zinc and one copper atoms per polypeptide chain and only a negligible amount of cadmium. The polypeptide is Metallothionein-3 (MT3) (Bos mutus grunniens (Wild yak)).